Consider the following 258-residue polypeptide: GTP cyclohydrolase FolE2 (258 aa).

It belongs to the GTP cyclohydrolase IV family.

The enzyme catalyses GTP + H2O = 7,8-dihydroneopterin 3'-triphosphate + formate + H(+). It participates in cofactor biosynthesis; 7,8-dihydroneopterin triphosphate biosynthesis; 7,8-dihydroneopterin triphosphate from GTP: step 1/1. In terms of biological role, converts GTP to 7,8-dihydroneopterin triphosphate. This Pseudothermotoga lettingae (strain ATCC BAA-301 / DSM 14385 / NBRC 107922 / TMO) (Thermotoga lettingae) protein is GTP cyclohydrolase FolE2.